The chain runs to 298 residues: Small ribosomal subunit protein uS3m (298 aa).

This sequence belongs to the universal ribosomal protein uS3 family.

The protein resides in the mitochondrion. This is Small ribosomal subunit protein uS3m (RPS3) from Acanthamoeba castellanii (Amoeba).